A 218-amino-acid polypeptide reads, in one-letter code: Glutathione S-transferase Mu 2 (218 aa).

Residues 2 to 88 enclose the GST N-terminal domain; sequence PMTLGYWDIR…YLGRKHNLCG (87 aa). 7 to 8 is a glutathione binding site; sequence YW. Phosphoserine is present on residues S27 and S44. Residues 43-46, K50, 59-60, and 72-73 contribute to the glutathione site; these read RSQW, NL, and QS. A GST C-terminal domain is found at 90-214; the sequence is TEEERIRVDV…SKPIFAKMAF (125 aa). Y116 serves as a coordination point for substrate. The residue at position 117 (S117) is a Phosphoserine.

It belongs to the GST superfamily. Mu family. In terms of assembly, homodimer or heterodimer.

The protein localises to the cytoplasm. It carries out the reaction RX + glutathione = an S-substituted glutathione + a halide anion + H(+). It catalyses the reaction 11(S)-hydroxy-14(S),15(S)-epoxy-(5Z,8Z,12E)-eicosatrienoate + glutathione = (11S,15S)-dihydroxy-14(R)-S-glutathionyl-(5Z,8Z,12E)-eicosatrienoate. Conjugation of reduced glutathione to a wide number of exogenous and endogenous hydrophobic electrophiles. Participates in the formation of novel hepoxilin regioisomers. This Rattus norvegicus (Rat) protein is Glutathione S-transferase Mu 2.